Here is a 341-residue protein sequence, read N- to C-terminus: ATP-dependent 6-phosphofructokinase 2 (341 aa).

ATP-binding positions include G10, 72 to 73 (RL), and 102 to 105 (GEGT). E103 lines the Mg(2+) pocket. Substrate is bound by residues 125–127 (TID), R162, 169–171 (MGR), E222, K266, and 272–275 (HVQR). The active-site Proton acceptor is the D127.

It belongs to the phosphofructokinase type A (PFKA) family. Mixed-substrate PFK group III subfamily. As to quaternary structure, homodimer or homotetramer. Mg(2+) is required as a cofactor.

It is found in the cytoplasm. It carries out the reaction beta-D-fructose 6-phosphate + ATP = beta-D-fructose 1,6-bisphosphate + ADP + H(+). The protein operates within carbohydrate degradation; glycolysis; D-glyceraldehyde 3-phosphate and glycerone phosphate from D-glucose: step 3/4. Its activity is regulated as follows. Allosterically inhibited by phosphoenolpyruvate. In terms of biological role, catalyzes the phosphorylation of D-fructose 6-phosphate to fructose 1,6-bisphosphate by ATP, the first committing step of glycolysis. This chain is ATP-dependent 6-phosphofructokinase 2, found in Streptomyces coelicolor (strain ATCC BAA-471 / A3(2) / M145).